Consider the following 151-residue polypeptide: uncharacterized protein (151 aa).

Positions 1-32 are cleaved as a signal peptide; sequence MEEAEKAKRRSIELLNETRNCAYSSFVALAEA. Residues 45–67 form a helical membrane-spanning segment; the sequence is AIGFAGGISGSGHICGALWGSIA.

Its subcellular location is the membrane. This is an uncharacterized protein from Archaeoglobus fulgidus (strain ATCC 49558 / DSM 4304 / JCM 9628 / NBRC 100126 / VC-16).